We begin with the raw amino-acid sequence, 318 residues long: Ubiquinol oxidase (318 aa).

Residues 150–170 traverse the membrane as a helical segment; it reads VVVLETVAAIPGMVGGMFRHL. Fe cation is bound by residues glutamate 154, glutamate 193, and histidine 196. The helical transmembrane segment at 212–232 threads the bilayer; it reads MLIKLGQFLFFNGYMVFYFVA. Residues glutamate 244, glutamate 295, and histidine 298 each coordinate Fe cation.

Belongs to the alternative oxidase family. In terms of assembly, found as monomers and homodimers. Fe cation serves as cofactor.

It localises to the mitosome membrane. It catalyses the reaction 2 a ubiquinol + O2 = 2 a ubiquinone + 2 H2O. Functionally, alternative oxidase which function may be to reoxidize reducing equivalents produced by glycolysis such as ubiquinol. In Trachipleistophora hominis (Microsporidian parasite), this protein is Ubiquinol oxidase (AOX).